Consider the following 2515-residue polypeptide: Protein tudor (2515 aa).

Residues S226, S235, and S239 each carry the phosphoserine modification. 2 Tudor domains span residues 455–513 and 641–696; these read APEL…LLEI and QLIL…HLEM. S800 carries the post-translational modification Phosphoserine. A disordered region spans residues 840-996; sequence QAVKSVSGSK…SSSESVAAAK (157 aa). A compositionally biased stretch (low complexity) spans 890–900; it reads STGSYSSGMSS. Positions 906-917 are enriched in polar residues; sequence RQQNGRTPIQSP. Basic and acidic residues predominate over residues 918–927; that stretch reads RHNEKQEAKK. 2 stretches are compositionally biased toward polar residues: residues 943–954 and 964–976; these read GQQGNQRSQNAP and QKST…SSKR. The segment covering 977–995 has biased composition (low complexity); that stretch reads SSGVGSDIASSSSESVAAA. 2 Tudor domains span residues 1062 to 1122 and 1355 to 1414; these read QLKV…FADP and KFDV…FYEH. Residues 1515–1589 form a disordered region; the sequence is EEDKGRKETV…KPATPVPEVV (75 aa). Positions 1540-1553 are enriched in basic and acidic residues; it reads NDKDREPKKSKPAE. The segment covering 1569–1584 has biased composition (pro residues); it reads SPVPAEPAPVPKPATP. Tudor domains follow at residues 1662 to 1718, 1839 to 1898, 2023 to 2082, 2211 to 2269, and 2392 to 2451; these read NVVN…SHIE, GFEK…SLPS, KAAV…LIKP, TTNS…PIPS, and DLKE…KPAR.

As to quaternary structure, may form part of a piRNA processing complex consisting of tud, aub and AGO3. Interacts with AGO3 (when symmetrically dimethylated on Arg residues) and aub (when symmetrically dimethylated on Arg residues). Interacts with vls. Interacts with me31B/DDX6 (when symmetrically dimethylated on Arg residues).

Its subcellular location is the cytoplasm. The protein resides in the perinuclear region. The protein localises to the cytoplasmic ribonucleoprotein granule. Functionally, may act via the Piwi-interacting RNA (piRNA) metabolic process mediated by aub and AGO3 Piwi proteins, which mediates the repression of transposable elements during meiosis by forming complexes composed of piRNAs and Piwi proteins and governs the methylation and subsequent repression of transposons. Required during oogenesis for the formation of primordial germ cells and for normal abdominal segmentation. Not involved in repression of retroelements. The chain is Protein tudor from Drosophila melanogaster (Fruit fly).